A 158-amino-acid chain; its full sequence is NADH-quinone oxidoreductase subunit B (158 aa).

Cys37, Cys38, Cys102, and Cys132 together coordinate [4Fe-4S] cluster.

This sequence belongs to the complex I 20 kDa subunit family. In terms of assembly, NDH-1 is composed of 14 different subunits. Subunits NuoB, C, D, E, F, and G constitute the peripheral sector of the complex. It depends on [4Fe-4S] cluster as a cofactor.

Its subcellular location is the cell inner membrane. The catalysed reaction is a quinone + NADH + 5 H(+)(in) = a quinol + NAD(+) + 4 H(+)(out). In terms of biological role, NDH-1 shuttles electrons from NADH, via FMN and iron-sulfur (Fe-S) centers, to quinones in the respiratory chain. Couples the redox reaction to proton translocation (for every two electrons transferred, four hydrogen ions are translocated across the cytoplasmic membrane), and thus conserves the redox energy in a proton gradient. In Hydrogenovibrio crunogenus (strain DSM 25203 / XCL-2) (Thiomicrospira crunogena), this protein is NADH-quinone oxidoreductase subunit B.